A 150-amino-acid polypeptide reads, in one-letter code: MIMLKTQRRIAAELLKCGENRIWIDPERIEDVAAAITREDIKRLIHDGVIKKKPIKGQSRARARAFQEARKKGRHRGPGSKKGKKTARMGKKEVWMMTIRALRKELRKLKAEGKLDAHTYRRLYIRAKGGQFKNKRQLYMFMQEHGILKE.

The interval 56–89 (KGQSRARARAFQEARKKGRHRGPGSKKGKKTARM) is disordered. A compositionally biased stretch (basic residues) spans 71–89 (KKGRHRGPGSKKGKKTARM).

This sequence belongs to the eukaryotic ribosomal protein eL19 family. As to quaternary structure, part of the 50S ribosomal subunit.

Binds to the 23S rRNA. This is Large ribosomal subunit protein eL19 from Thermococcus kodakarensis (strain ATCC BAA-918 / JCM 12380 / KOD1) (Pyrococcus kodakaraensis (strain KOD1)).